The sequence spans 417 residues: Gamma-glutamyl phosphate reductase (417 aa).

The protein belongs to the gamma-glutamyl phosphate reductase family.

The protein localises to the cytoplasm. It catalyses the reaction L-glutamate 5-semialdehyde + phosphate + NADP(+) = L-glutamyl 5-phosphate + NADPH + H(+). Its pathway is amino-acid biosynthesis; L-proline biosynthesis; L-glutamate 5-semialdehyde from L-glutamate: step 2/2. Its function is as follows. Catalyzes the NADPH-dependent reduction of L-glutamate 5-phosphate into L-glutamate 5-semialdehyde and phosphate. The product spontaneously undergoes cyclization to form 1-pyrroline-5-carboxylate. The chain is Gamma-glutamyl phosphate reductase from Escherichia coli O81 (strain ED1a).